The primary structure comprises 128 residues: Large ribosomal subunit protein bL12 (128 aa).

Belongs to the bacterial ribosomal protein bL12 family. Homodimer. Part of the ribosomal stalk of the 50S ribosomal subunit. Forms a multimeric L10(L12)X complex, where L10 forms an elongated spine to which 2 to 4 L12 dimers bind in a sequential fashion. Binds GTP-bound translation factors.

Functionally, forms part of the ribosomal stalk which helps the ribosome interact with GTP-bound translation factors. Is thus essential for accurate translation. This Corynebacterium kroppenstedtii (strain DSM 44385 / JCM 11950 / CIP 105744 / CCUG 35717) protein is Large ribosomal subunit protein bL12.